A 279-amino-acid chain; its full sequence is NH(3)-dependent NAD(+) synthetase (279 aa).

46 to 53 (GISGGQDS) provides a ligand contact to ATP. Mg(2+) is bound at residue aspartate 52. A deamido-NAD(+)-binding site is contributed by arginine 145. Position 165 (threonine 165) interacts with ATP. Mg(2+) is bound at residue glutamate 170. Positions 178 and 185 each coordinate deamido-NAD(+). ATP is bound by residues lysine 194 and threonine 216. A deamido-NAD(+)-binding site is contributed by 265–266 (HK).

The protein belongs to the NAD synthetase family. As to quaternary structure, homodimer.

The catalysed reaction is deamido-NAD(+) + NH4(+) + ATP = AMP + diphosphate + NAD(+) + H(+). It functions in the pathway cofactor biosynthesis; NAD(+) biosynthesis; NAD(+) from deamido-NAD(+) (ammonia route): step 1/1. Its function is as follows. Catalyzes the ATP-dependent amidation of deamido-NAD to form NAD. Uses ammonia as a nitrogen source. This Rhodococcus opacus (strain B4) protein is NH(3)-dependent NAD(+) synthetase.